Reading from the N-terminus, the 179-residue chain is uncharacterized protein (179 aa).

The tract at residues 53–82 (SPEREDPESPTRGVDEVDGACSEPPTPRPE) is disordered. Positions 54–67 (PEREDPESPTRGVD) are enriched in basic and acidic residues.

This is an uncharacterized protein from Ictaluridae (bullhead catfishes).